A 458-amino-acid polypeptide reads, in one-letter code: UDP-N-acetylmuramoylalanine--D-glutamate ligase (458 aa).

124-130 contributes to the ATP binding site; that stretch reads GSDGKTT.

It belongs to the MurCDEF family.

Its subcellular location is the cytoplasm. The enzyme catalyses UDP-N-acetyl-alpha-D-muramoyl-L-alanine + D-glutamate + ATP = UDP-N-acetyl-alpha-D-muramoyl-L-alanyl-D-glutamate + ADP + phosphate + H(+). Its pathway is cell wall biogenesis; peptidoglycan biosynthesis. Cell wall formation. Catalyzes the addition of glutamate to the nucleotide precursor UDP-N-acetylmuramoyl-L-alanine (UMA). This is UDP-N-acetylmuramoylalanine--D-glutamate ligase from Clostridium perfringens (strain 13 / Type A).